Here is a 197-residue protein sequence, read N- to C-terminus: Presequence translocated-associated motor subunit PAM17, mitochondrial (197 aa).

Residues 1-14 (MFTSAIRLSSQRLF) constitute a mitochondrion transit peptide. 2 helical membrane passes run 64–84 (INVG…WAYL) and 103–123 (VISA…PIVG).

This sequence belongs to the PAM17 family. In terms of assembly, component of the PAM complex, at least composed of mtHsp70, MGE1, TIM44, PAM16, PAM17 and PAM18/TIM14.

Its subcellular location is the mitochondrion inner membrane. Component of the PAM complex, a complex required for the translocation of transit peptide-containing proteins from the inner membrane into the mitochondrial matrix in an ATP-dependent manner. In the complex, it is required to organize PAM16-PAM18 (TIM16-TIM14) heterodimer. This chain is Presequence translocated-associated motor subunit PAM17, mitochondrial (PAM17), found in Saccharomyces cerevisiae (strain ATCC 204508 / S288c) (Baker's yeast).